We begin with the raw amino-acid sequence, 333 residues long: Terminal uridylyltransferase 4 (333 aa).

UTP-binding positions include serine 54 and 65–68 (SDVD). Mg(2+)-binding residues include aspartate 66 and aspartate 68. Arginine 121 lines the RNA pocket. UTP is bound by residues 144–148 (GVRNS), lysine 169, lysine 173, and 188–189 (SY). The region spanning 237-302 (LGTQVLDFLH…WCIEDPYELN (66 aa)) is the PAP-associated domain.

This sequence belongs to the DNA polymerase type-B-like family. In terms of assembly, monomer. Requires Mg(2+) as cofactor. Mn(2+) is required as a cofactor.

The catalysed reaction is RNA(n) + UTP = RNA(n)-3'-uridine ribonucleotide + diphosphate. Its activity is regulated as follows. The 3' uridylated RNA substrate is involved in the selective incorporation of UTP; UTP binding is favored due to the constraint posed on the positioning of the NTP base by the continuous stacking interactions between Tyr-189 side chain, the bound NTP, and the terminal nucleoside base of the RNA substrate. In terms of biological role, terminal uridylyltransferase which, specifically, catalyzes the addition of Us to the 3'-hydroxyl group of single-stranded RNAs with a 3'-terminal U. This chain is Terminal uridylyltransferase 4, found in Trypanosoma brucei brucei (strain 927/4 GUTat10.1).